Consider the following 427-residue polypeptide: 3-phosphoshikimate 1-carboxyvinyltransferase (427 aa).

Residues Lys-22, Ser-23, and Arg-27 each coordinate 3-phosphoshikimate. Phosphoenolpyruvate is bound at residue Lys-22. 2 residues coordinate phosphoenolpyruvate: Gly-96 and Arg-124. 7 residues coordinate 3-phosphoshikimate: Ser-169, Ser-170, Gln-171, Ser-197, Asp-313, Asn-336, and Lys-340. Residue Gln-171 participates in phosphoenolpyruvate binding. The active-site Proton acceptor is Asp-313. Residues Arg-344, Arg-386, and Lys-411 each contribute to the phosphoenolpyruvate site.

The protein belongs to the EPSP synthase family. As to quaternary structure, monomer.

It is found in the cytoplasm. The catalysed reaction is 3-phosphoshikimate + phosphoenolpyruvate = 5-O-(1-carboxyvinyl)-3-phosphoshikimate + phosphate. It participates in metabolic intermediate biosynthesis; chorismate biosynthesis; chorismate from D-erythrose 4-phosphate and phosphoenolpyruvate: step 6/7. Functionally, catalyzes the transfer of the enolpyruvyl moiety of phosphoenolpyruvate (PEP) to the 5-hydroxyl of shikimate-3-phosphate (S3P) to produce enolpyruvyl shikimate-3-phosphate and inorganic phosphate. The polypeptide is 3-phosphoshikimate 1-carboxyvinyltransferase (Salmonella dublin (strain CT_02021853)).